A 392-amino-acid chain; its full sequence is Probable myosin light chain kinase DDB_G0271550 (392 aa).

The region spanning Tyr-20–Leu-278 is the Protein kinase domain. Residues Ile-26–Val-34 and Lys-49 each bind ATP. Residue Asp-142 is the Proton acceptor of the active site. A compositionally biased stretch (polar residues) spans Ser-317 to Ala-326. The interval Ser-317–Ile-392 is disordered. Positions Asn-327–Ile-392 are enriched in low complexity.

Belongs to the protein kinase superfamily. CAMK Ser/Thr protein kinase family. CaMK subfamily.

It carries out the reaction L-seryl-[myosin light chain] + ATP = O-phospho-L-seryl-[myosin light chain] + ADP + H(+). It catalyses the reaction L-threonyl-[myosin light chain] + ATP = O-phospho-L-threonyl-[myosin light chain] + ADP + H(+). Its function is as follows. May phosphorylate a specific serine in the N-terminus of a myosin light chain. The sequence is that of Probable myosin light chain kinase DDB_G0271550 from Dictyostelium discoideum (Social amoeba).